We begin with the raw amino-acid sequence, 151 residues long: Ribonuclease H (151 aa).

Positions 1-143 constitute an RNase H type-1 domain; the sequence is MSDVVVIHTD…ADVLATRGLQ (143 aa). Mg(2+)-binding residues include aspartate 10, glutamate 49, aspartate 71, and aspartate 135.

It belongs to the RNase H family. As to quaternary structure, monomer. Mg(2+) is required as a cofactor.

Its subcellular location is the cytoplasm. It carries out the reaction Endonucleolytic cleavage to 5'-phosphomonoester.. Functionally, endonuclease that specifically degrades the RNA of RNA-DNA hybrids. This Mycolicibacterium gilvum (strain PYR-GCK) (Mycobacterium gilvum (strain PYR-GCK)) protein is Ribonuclease H.